Here is an 84-residue protein sequence, read N- to C-terminus: Cytoplasmic envelopment protein 3 (84 aa).

The N-myristoyl glycine; by host moiety is linked to residue G2. The tract at residues 40-46 (DLDDLRC) is asp/Glu-rich (acidic).

This sequence belongs to the herpesviridae cytoplasmic envelopment protein 3 family. Interacts with cytoplasmic envelopment protein 2; this interaction is essential for the proper localization of each protein to the assembly complex and thus for the production of infectious virus. In terms of processing, myristoylation and palmitoylation (probably on one or more of the nearby cysteines at the N-terminus) enable membrane-binding and Golgi apparatus-specific targeting and are essential for efficient packaging. Phosphorylated. Phosphorylation does not seem to be required for recycling to the host Golgi apparatus. Packaging is selective for underphosphorylated forms.

It is found in the virion tegument. The protein localises to the virion membrane. It localises to the host cell membrane. The protein resides in the host Golgi apparatus membrane. Functionally, plays an important role in the cytoplasmic envelopment of tegument proteins and capsids during the assembly and egress processes. Also participates in viral entry at the fusion step probably by regulating the core fusion machinery. The protein is Cytoplasmic envelopment protein 3 (MDV023) of Gallus gallus (Chicken).